Reading from the N-terminus, the 322-residue chain is Triosephosphate isomerase, chloroplastic (322 aa).

A chloroplast-targeting transit peptide spans 1–67; that stretch reads MAVVSTSLAS…RRCPRGVVAM (67 aa). Positions 78 and 80 each coordinate substrate. Catalysis depends on histidine 162, which acts as the Electrophile. The Proton acceptor role is filled by glutamate 232.

It belongs to the triosephosphate isomerase family. As to quaternary structure, homodimer.

Its subcellular location is the plastid. It localises to the chloroplast. The catalysed reaction is D-glyceraldehyde 3-phosphate = dihydroxyacetone phosphate. It participates in carbohydrate biosynthesis; Calvin cycle. This chain is Triosephosphate isomerase, chloroplastic (TPIP1), found in Spinacia oleracea (Spinach).